The sequence spans 516 residues: Na(+)/H(+) antiporter NhaB (516 aa).

Transmembrane regions (helical) follow at residues 23–43 (LALI…PFVA), 61–80 (CYPL…IGMT), 97–117 (LLLI…LFVF), 120–140 (LLLG…AAAF), 144–164 (FLDA…FYGI), 202–222 (LMMH…VGEP), 238–258 (FFIR…LTCL), 303–323 (AVIG…VGLI), 348–368 (TEAL…AVII), 391–411 (LFYL…VGTV), 447–467 (ATPN…APLI), and 475–495 (VWMA…CVEF).

The protein belongs to the NhaB Na(+)/H(+) (TC 2.A.34) antiporter family.

Its subcellular location is the cell inner membrane. It catalyses the reaction 2 Na(+)(in) + 3 H(+)(out) = 2 Na(+)(out) + 3 H(+)(in). Its function is as follows. Na(+)/H(+) antiporter that extrudes sodium in exchange for external protons. This is Na(+)/H(+) antiporter NhaB from Klebsiella pneumoniae (strain 342).